We begin with the raw amino-acid sequence, 238 residues long: Probable transcriptional regulatory protein CF0838 (238 aa).

It belongs to the TACO1 family.

It localises to the cytoplasm. The polypeptide is Probable transcriptional regulatory protein CF0838 (Chlamydia felis (strain Fe/C-56) (Chlamydophila felis)).